A 287-amino-acid polypeptide reads, in one-letter code: U1 small nuclear ribonucleoprotein A (287 aa).

An RRM 1 domain is found at 16 to 95 (HTIYINNLNE…KPMRIQYAKT (80 aa)). Lysine 66 is subject to N6-acetyllysine. The interval 106–134 (TYVERDRKREKRKPKSQETPAAKKAVQGG) is disordered. A compositionally biased stretch (low complexity) spans 125 to 134 (PAAKKAVQGG). Residue arginine 157 is modified to Omega-N-methylarginine. The RRM 2 domain occupies 213-287 (HILFLTNLPE…NAMKISFAKK (75 aa)).

This sequence belongs to the RRM U1 A/B'' family. U1 snRNP is composed of the 7 core Sm proteins SNRPB, SNRPD1, SNRPD2, SNRPD3, SNRPE, SNRPF and SNRPG that assemble in a heptameric protein ring on the Sm site of the small nuclear RNA to form the core snRNP, and at least three U1 snRNP-specific proteins SNRNP70/U1-70K, SNRPA/U1-A and SNRPC/U1-C. Interacts with SFPQ; component of a snRNP-free complex with SFPQ. Interacts with IVNS1ABP (via BACK domain); the interaction is indirect.

It is found in the nucleus. In terms of biological role, component of the spliceosomal U1 snRNP, which is essential for recognition of the pre-mRNA 5' splice-site and the subsequent assembly of the spliceosome. U1 snRNP is the first snRNP to interact with pre-mRNA. This interaction is required for the subsequent binding of U2 snRNP and the U4/U6/U5 tri-snRNP. SNRPA binds stem loop II of U1 snRNA. In a snRNP-free form (SF-A) may be involved in coupled pre-mRNA splicing and polyadenylation process. May bind preferentially to the 5'-UGCAC-3' motif on RNAs. In Mus musculus (Mouse), this protein is U1 small nuclear ribonucleoprotein A (Snrpa).